A 191-amino-acid chain; its full sequence is Calcium and integrin-binding protein 1 (191 aa).

Gly2 is lipidated: N-myristoyl glycine. EF-hand domains follow at residues 103–138 (TPDIKSHYAFRIFDFDDDGTLNREDLSRLVNCLTGE) and 148–183 (EMKQLIDNILEESDIDRDGTINLSEFQHVISRSPDF). Ca(2+)-binding residues include Asp116, Asp118, Asp120, Thr122, Asp127, Asp161, Asp163, Asp165, Thr167, and Glu172. Asp118 carries the post-translational modification Phosphoserine.

Monomer. Interacts with MYO1C. Interacts (via C-terminal region) with PPP3R1 and CACNA1C; the interactions increase upon cardiomyocytes hypertrophy. Interacts with the heterodimeric integrin alpha-IIb/beta3 (ITGA2B-ITGB3). Interacts with ITGA2B (via cytoplasmic domain); the interaction is direct and calcium-dependent. Interacts with the protein kinases PLK2/SNK and PRKDC (via the region immediately upstream of the kinase domain). Interacts with PLK3; the interaction inhibits PLK3 kinase activity. Interacts with PSEN2. Interacts (via C-terminus) with F8. Interacts with NBR1 (via C-terminus). Interacts with FEZ1 (via C-terminus). Interacts with UBR5 (via C-terminus); the interaction is sensitive to DNA damage, and may target CIB1 for ubiquitin-mediated degradation. Interacts with IFI6; the interaction is direct. Interacts with BCL2. Interacts with ITPR3; the interaction occurs in a calcium-dependent manner. Interacts with PTK2/FAK1. Interacts with MAP3K5; the interaction inhibits MAP3K5 activation by phosphorylation, and its subsequent interaction with TRAF2. Isoform 2 interacts with PRKD2 (via N-terminal AP-rich region), PTK2/FAK1 and PAK1. Interacts with TAS1R2 (via C-terminus); the interaction is independent of the myristoylation state of CIB1. Interacts (via C-terminal region) with STMN2 (via the N-terminal region); the interaction is direct, occurs in a calcium-dependent manner and attenuates the STMN2-induced neurite outgrowth inhibition. Interacts with SPHK1, the interaction occurs in a calcium-dependent manner. Interacts with ITGA2B (via C-terminal cytoplasmic tail); the interaction occurs upon platelet aggregation and is stabilized/increased in a calcium and magnesium-dependent manner. Interacts with PAK1 (via N-terminal region); the interaction is direct and occurs in a calcium-dependent manner. Interacts with RAC3 (via C-terminal region); the interaction induces their association with the cytoskeleton upon alpha-IIb/beta3 integrin-mediated adhesion. Interacts with ITGA5 and ITGAV. Interacts and forms a complex with TMC6 and TMC8; the interaction stabilizes each component of the complex. In terms of assembly, (Microbial infection) Interacts with human papillomavirus 4/HPV4 protein E8, human papillomavirus 5/HPV5 protein E1, and human papillomavirus 16/HPV16 proteins E2 and E5. In terms of processing, phosphorylation of isoform 2 at Ser-118 by PRKD2 increases its ability to stimulate tumor angiogenesis. Ubiquitously expressed. Expressed in the epidermis, hair follicles and keratinocytes. Detected in platelets and in cell lines of megakaryocytic and erythrocytic lineages. Both isoform 1 and isoform 2 are detected in various cancer cell lines, with isoform 2 being the predominant form (at protein level).

Its subcellular location is the membrane. It is found in the cell membrane. The protein resides in the sarcolemma. The protein localises to the apical cell membrane. It localises to the cell projection. Its subcellular location is the ruffle membrane. It is found in the filopodium tip. The protein resides in the growth cone. The protein localises to the lamellipodium. It localises to the cytoplasm. Its subcellular location is the cytoskeleton. It is found in the microtubule organizing center. The protein resides in the centrosome. The protein localises to the perinuclear region. It localises to the nucleus. Its subcellular location is the neuron projection. It is found in the perikaryon. The protein resides in the golgi apparatus. The protein localises to the trans-Golgi network. Calcium-binding protein that plays a role in the regulation of numerous cellular processes, such as cell differentiation, cell division, cell proliferation, cell migration, thrombosis, angiogenesis, cardiac hypertrophy and apoptosis. Involved in bone marrow megakaryocyte differentiation by negatively regulating thrombopoietin-mediated signaling pathway. Participates in the endomitotic cell cycle of megakaryocyte, a form of mitosis in which both karyokinesis and cytokinesis are interrupted. Plays a role in integrin signaling by negatively regulating alpha-IIb/beta3 activation in thrombin-stimulated megakaryocytes preventing platelet aggregation. Up-regulates PTK2/FAK1 activity, and is also needed for the recruitment of PTK2/FAK1 to focal adhesions; it thus appears to play an important role in focal adhesion formation. Positively regulates cell migration on fibronectin in a CDC42-dependent manner, the effect being negatively regulated by PAK1. Functions as a negative regulator of stress activated MAP kinase (MAPK) signaling pathways. Down-regulates inositol 1,4,5-trisphosphate receptor-dependent calcium signaling. Involved in sphingosine kinase SPHK1 translocation to the plasma membrane in a N-myristoylation-dependent manner preventing TNF-alpha-induced apoptosis. Regulates serine/threonine-protein kinase PLK3 activity for proper completion of cell division progression. Plays a role in microtubule (MT) dynamics during neuronal development; disrupts the MT depolymerization activity of STMN2 attenuating NGF-induced neurite outgrowth and the MT reorganization at the edge of lamellipodia. Promotes cardiomyocyte hypertrophy via activation of the calcineurin/NFAT signaling pathway. Stimulates calcineurin PPP3R1 activity by mediating its anchoring to the sarcolemma. In ischemia-induced (pathological or adaptive) angiogenesis, stimulates endothelial cell proliferation, migration and microvessel formation by activating the PAK1 and ERK1/ERK2 signaling pathway. Also promotes cancer cell survival and proliferation. May regulate cell cycle and differentiation of spermatogenic germ cells, and/or differentiation of supporting Sertoli cells. Forms a complex with TMC6/EVER1 and TMC8/EVER2 in lymphocytes and keratynocytes where CIB1 stabilizes TMC6 and TMC8 levels and reciprocally. Functionally, acts as a restriction factor that promotes keratinocyte-intrinsic immunity to human beta-papillomaviruses (HPVs). Its function is as follows. Plays a regulatory role in angiogenesis and tumor growth by mediating PKD/PRKD2-induced vascular endothelial growth factor A (VEGFA) secretion. This Homo sapiens (Human) protein is Calcium and integrin-binding protein 1 (CIB1).